A 195-amino-acid chain; its full sequence is uncharacterized protein (195 aa).

Residues 1–35 (MASSSSAALRPFGTARLTPGRQTGRQTQQQISAPE) are disordered. Residues 20–30 (GRQTGRQTQQQ) show a composition bias toward low complexity. An MSP domain is found at 76–184 (GVTVIPRVAR…PASINMALEA (109 aa)).

This is an uncharacterized protein from Caenorhabditis elegans.